A 365-amino-acid polypeptide reads, in one-letter code: Prostaglandin E2 receptor EP3 subtype (365 aa).

Residues 1–22 (MASMWAPEHSAEAHSNLSSTTD) are disordered. Residues 1-30 (MASMWAPEHSAEAHSNLSSTTDDCGSVSVA) lie on the Extracellular side of the membrane. Positions 13–22 (AHSNLSSTTD) are enriched in polar residues. Asn-16 carries N-linked (GlcNAc...) asparagine glycosylation. Residues 31 to 55 (FPITMMVTGFVGNALAMLLVSRSYR) form a helical membrane-spanning segment. Over 56–68 (RRESKRKKSFLLC) the chain is Cytoplasmic. A helical membrane pass occupies residues 69–89 (IGWLALTDLVGQLLTSPVVIL). At 90-108 (VYLSQRRWEQLDPSGRLCT) the chain is on the extracellular side. An intrachain disulfide couples Cys-107 to Cys-184. A helical membrane pass occupies residues 109–130 (FFGLTMTVFGLSSLLVASAMAV). Over 131–151 (ERALAIRAPHWYASHMKTRAT) the chain is Cytoplasmic. A helical transmembrane segment spans residues 152-173 (PVLLGVWLSVLAFALLPVLGVG). The Extracellular portion of the chain corresponds to 174-203 (RYSVQWPGTWCFISTGPAGNETDPAREPGS). A glycan (N-linked (GlcNAc...) asparagine) is linked at Asn-193. A helical membrane pass occupies residues 204–229 (VAFASAFACLGLLALVVTFACNLATI). Topologically, residues 230–259 (KALVSRCRAKAAVSQSSAQWGRITTETAIQ) are cytoplasmic. The chain crosses the membrane as a helical span at residues 260-283 (LMGIMCVLSVCWSPLLIMMLKMIF). Topologically, residues 284-303 (NQMSVEQCKTQMGKEKECNS) are extracellular. Residues 304–325 (FLIAVRLASLNQILDPWVYLLL) form a helical membrane-spanning segment. At 326–365 (RKILLRKFCQIRDHTNYASSSTSLPCPGSSALMWSDQLER) the chain is on the cytoplasmic side.

It belongs to the G-protein coupled receptor 1 family. As to quaternary structure, interacts (via C-terminus) with MKLN1. In terms of processing, ligand binding is affected by cAMP-dependent phosphorylation in brain membranes. As to expression, detected in platelets. Kidney, uterus, and mastocytoma cells, and in a lesser amount in brain, thymus, lung, heart, stomach and spleen.

The protein resides in the cell membrane. In terms of biological role, receptor for prostaglandin E2 (PGE2). Required for normal development of fever in response to pyrinogens, including IL1B, prostaglandin E2 and bacterial lipopolysaccharide (LPS). Required for normal potentiation of platelet aggregation by prostaglandin E2, and thus plays a role in the regulation of blood coagulation. Required for increased HCO3(-) secretion in the duodenum in response to mucosal acidification, and thereby contributes to the protection of the mucosa against acid-induced ulceration. Not required for normal kidney function, normal urine volume and osmolality. Its function is as follows. Receptor for prostaglandin E2 (PGE2); ligand binding activates a signaling cascade via G(i) proteins that leads to inhibition of adenylate cyclase. Shows high agonist-independent constitutive inhibition of adenylate cyclase. Receptor for prostaglandin E2 (PGE2); ligand binding activates a signaling cascade via G(i) proteins that leads to inhibition of adenylate cyclase. Requires much higher ligand concentrations than isoform Alpha for activation. Does not display agonist-independent constitutive inhibition of adenylate cyclase. Functionally, receptor for prostaglandin E2 (PGE2); ligand binding can activate several distinct signaling cascades, resulting in activation or inhibition of adenylate cyclase. This Mus musculus (Mouse) protein is Prostaglandin E2 receptor EP3 subtype (Ptger3).